The chain runs to 328 residues: Malate dehydrogenase (328 aa).

An NAD(+)-binding site is contributed by glycine 11–glycine 17. Substrate is bound by residues arginine 94 and arginine 100. NAD(+) contacts are provided by residues asparagine 107, glutamine 114, and valine 131 to asparagine 133. Positions 133 and 164 each coordinate substrate. Histidine 189 (proton acceptor) is an active-site residue.

It belongs to the LDH/MDH superfamily. MDH type 2 family.

It catalyses the reaction (S)-malate + NAD(+) = oxaloacetate + NADH + H(+). Its function is as follows. Catalyzes the reversible oxidation of malate to oxaloacetate. This is Malate dehydrogenase from Xylella fastidiosa (strain 9a5c).